The primary structure comprises 437 residues: Aromatic peroxidase fscJ (437 aa).

Residues Met1 to Ala19 form the signal peptide. Cys83 serves as a coordination point for heme.

It belongs to the chloroperoxidase family. Heme b serves as cofactor.

The protein operates within secondary metabolite biosynthesis. In terms of biological role, aromatic peroxidase; part of the fragmented gene cluster that mediates the biosynthesis of fusarochromene, a tryptophan-derived metabolite closely related to a group of mycotoxins including fusarochromanone. The role of fscJ within the pathway has not been identified yet. The first step of the pathway is the epimerization of L-tryptophan to D-tryptophan in the presence of the NRPS-like tryptophan epimerase fscC. D-tryptophan is subsequently hydroxylated by the tryptophan 6-hydroxylase fscE to yield 6-hydroxytryptophan. The pyrrole ring undergoes cleavaged by the tryptophan 2,3-dioxygenase fscD and is finally converted to 4-hydroxykyrunenine by the hydrolase fscH. The NRPS-like oxidoreductase fscA reduces the carboxyl group to primary alcohol and the DMATS-type prenyltransferase fscG performs prenylation, followed by the formation of a chromene ring catalyzed by the oxidoreductase fscI, which leads to desacetylfusarochromene. Epoxidation by fscF and rearrangement reactions of chromene double bonds convert compound desacetylfusarochromene to fusarochromanones. Although specific acetyltransferases were not found near the fsc gene cluster, several predicted enzymes containing the N-acetyltransferase superfamily domain are present in the genome of F.equiseti. These predicted enzymes may have the potential to convert desacetylfusarochromene to fusarochromene. The polypeptide is Aromatic peroxidase fscJ (Fusarium equiseti (Fusarium scirpi)).